The sequence spans 382 residues: Opsin Rh3 (382 aa).

At 1-56 (MEYHNVSSVLGNVSSVLRPDARLSAESRLLGWNVPPDELRHIPEHWLIYPEPPESM) the chain is on the extracellular side. N12 is a glycosylation site (N-linked (GlcNAc...) asparagine). The chain crosses the membrane as a helical span at residues 57 to 81 (NYLLGTLYIFFTVISMIGNGLVMWV). Residues 82-93 (FSAAKSLRTPSN) are Cytoplasmic-facing. Residues 94–118 (ILVINLAFCDFMMMIKTPIFIYNSF) traverse the membrane as a helical segment. The Extracellular segment spans residues 119-132 (HQGYALGHLGCQIF). A disulfide bridge connects residues C129 and C206. The helical transmembrane segment at 133–152 (GVIGSYTGIAAGATNAFIAY) threads the bilayer. Topologically, residues 153-170 (DRYNVITRPMEGKMTHGK) are cytoplasmic. The helical transmembrane segment at 171–195 (AIAMIIFIYLYATPWVVACYTESWG) threads the bilayer. The Extracellular segment spans residues 196-219 (RFVPEGYLTSCTFDYLTDNFDTRL). A helical membrane pass occupies residues 220-247 (FVACIFFFSFVCPTTMITYYYSQIVGHV). Topologically, residues 248–283 (FSHEKALRDQAKKMNVDSLRSNVDKSKEAAEIRIAK) are cytoplasmic. The helical transmembrane segment at 284–307 (AAITICFLFFASWTPYGVMSLIGA) threads the bilayer. Over 308 to 315 (FGDKTLLT) the chain is Extracellular. The helical transmembrane segment at 316–340 (PGATMIPACTCKMVACIDPFVYAIS) threads the bilayer. K327 carries the post-translational modification N6-(retinylidene)lysine. Residues 341–382 (HPRYRMELQKRCPWLAISEKAPESAAAISTSTTQEQQQTTAA) lie on the Cytoplasmic side of the membrane.

This sequence belongs to the G-protein coupled receptor 1 family. Opsin subfamily. In terms of processing, phosphorylated on some or all of the serine and threonine residues present in the C-terminal region.

It localises to the membrane. Visual pigments are the light-absorbing molecules that mediate vision. They consist of an apoprotein, opsin, covalently linked to cis-retinal. The chain is Opsin Rh3 (Rh3) from Drosophila pseudoobscura pseudoobscura (Fruit fly).